The sequence spans 1301 residues: Tyrosine-protein phosphatase 99A (1301 aa).

A signal peptide spans 1–28 (MPRPQHHALLRAMLKLLLFASIAEHCAT). The Extracellular segment spans residues 29–394 (ALPTNSSNSP…RQSHNDYNLA (366 aa)). The segment at 31–63 (PTNSSNSPSSPSPFTVASLPPTTASSSSSPAVI) is disordered. The N-linked (GlcNAc...) asparagine glycan is linked to Asn33. Positions 33 to 63 (NSSNSPSSPSPFTVASLPPTTASSSSSPAVI) are enriched in low complexity. 3 Fibronectin type-III domains span residues 66 to 165 (SSFD…YAAV), 173 to 269 (KPQN…TDVG), and 270 to 376 (GPSA…LQPN). N-linked (GlcNAc...) asparagine glycans are attached at residues Asn176, Asn212, Asn278, Asn322, and Asn336. Residues 395-415 (VLVGIIFSCFGIILIIMAFFL) form a helical membrane-spanning segment. The Cytoplasmic portion of the chain corresponds to 416–1301 (WSRKCFHAAY…TDAQNLDIVG (886 aa)). Tyrosine-protein phosphatase domains are found at residues 476 to 741 (FSRE…LVEA) and 764 to 1016 (LEQQ…LSFL). Catalysis depends on Cys682, which acts as the Phosphocysteine intermediate. Polar residues predominate over residues 1092 to 1106 (TALNETVSTPSTDTN). Disordered regions lie at residues 1092–1199 (TALN…PTIP) and 1257–1281 (VGDLLMNNADNSPTASPTITNNNHI). Residues 1107-1130 (PSLLPILSLLPPTVAPLSSSSSTT) show a composition bias toward low complexity. A compositionally biased stretch (pro residues) spans 1131-1142 (PPTPSTPTPQPP). The segment covering 1150–1161 (HSPSDLSHQISS) has biased composition (polar residues). Positions 1162 to 1188 (TVANAASPVTPATASASAGATPTTPMT) are enriched in low complexity. Residues 1264–1273 (NADNSPTASP) show a composition bias toward polar residues.

Belongs to the protein-tyrosine phosphatase family. Receptor class subfamily. Selectively expressed in a subset of axons and pioneer neurons (including aCC and RP2) in the embryo.

Its subcellular location is the membrane. The enzyme catalyses O-phospho-L-tyrosyl-[protein] + H2O = L-tyrosyl-[protein] + phosphate. In terms of biological role, may play a key role in signal transduction and growth control. May have a role in the establishment of the intersegmental and segmental nerves. This Drosophila melanogaster (Fruit fly) protein is Tyrosine-protein phosphatase 99A (Ptp99A).